The primary structure comprises 488 residues: Glutamate--tRNA ligase (488 aa).

Residues 11–21 (PSPTGQIHIGN) carry the 'HIGH' region motif. Zn(2+) contacts are provided by cysteine 108, cysteine 110, cysteine 135, and aspartate 137. Positions 252–256 (KLSKR) match the 'KMSKS' region motif. Residue lysine 255 participates in ATP binding.

Belongs to the class-I aminoacyl-tRNA synthetase family. Glutamate--tRNA ligase type 1 subfamily. Monomer. Requires Zn(2+) as cofactor.

The protein localises to the cytoplasm. The enzyme catalyses tRNA(Glu) + L-glutamate + ATP = L-glutamyl-tRNA(Glu) + AMP + diphosphate. In terms of biological role, catalyzes the attachment of glutamate to tRNA(Glu) in a two-step reaction: glutamate is first activated by ATP to form Glu-AMP and then transferred to the acceptor end of tRNA(Glu). The protein is Glutamate--tRNA ligase of Natranaerobius thermophilus (strain ATCC BAA-1301 / DSM 18059 / JW/NM-WN-LF).